A 119-amino-acid polypeptide reads, in one-letter code: Large ribosomal subunit protein bL20 (119 aa).

This sequence belongs to the bacterial ribosomal protein bL20 family.

Functionally, binds directly to 23S ribosomal RNA and is necessary for the in vitro assembly process of the 50S ribosomal subunit. It is not involved in the protein synthesizing functions of that subunit. This Xanthomonas oryzae pv. oryzae (strain KACC10331 / KXO85) protein is Large ribosomal subunit protein bL20.